We begin with the raw amino-acid sequence, 1248 residues long: ABC transporter B family member 7 (1248 aa).

The next 6 membrane-spanning stretches (helical) occupy residues 32–52, 82–102, 158–175, 179–201, 261–281, and 299–321; these read IVLM…QPFM, FLYL…CWMV, FTQL…AFIV, LTLA…TYIM, GLGI…AIWY, and VITS…NSFA. In terms of domain architecture, ABC transmembrane type-1 1 spans 35–322; sequence MVIGTLSAMA…TLPSLNSFAA (288 aa). The ABC transporter 1 domain occupies 357-593; it reads IELRDVYFRY…PEGTYSQLVR (237 aa). An ATP-binding site is contributed by 392–399; the sequence is GQSGSGKS. N473 and N652 each carry an N-linked (GlcNAc...) asparagine glycan. The helical transmembrane segment at 682-702 threads the bilayer; the sequence is VLLLGSLAAVIHGIVFPVQGL. Residues 683–970 enclose the ABC transmembrane type-1 2 domain; that stretch reads LLLGSLAAVI…TSTMAPDINK (288 aa). An N-linked (GlcNAc...) asparagine glycan is attached at N720. A helical transmembrane segment spans residues 722–742; the sequence is SLFWALIFVALGLTDLIVIPL. N779 is a glycosylation site (N-linked (GlcNAc...) asparagine). Helical transmembrane passes span 813–833, 834–854, 914–934, and 939–959; these read IIGA…MALL, VAPV…GFGA, GSYL…SWLI, and ATFG…VGVT. Residues 1005-1242 enclose the ABC transporter 2 domain; the sequence is IELQHVSFRY…SGGAYASLVA (238 aa). 1040–1047 is a binding site for ATP; it reads GESGSGKS. N1094, N1193, and N1244 each carry an N-linked (GlcNAc...) asparagine glycan.

The protein belongs to the ABC transporter superfamily. ABCB family. Multidrug resistance exporter (TC 3.A.1.201) subfamily.

The protein localises to the membrane. This Arabidopsis thaliana (Mouse-ear cress) protein is ABC transporter B family member 7 (ABCB7).